Here is an 87-residue protein sequence, read N- to C-terminus: MKLSIFFVLFFIAIAYCQPEFLDDEEDEVEETLPVAEEGREKSCITWRNSCMHNDKGCCFPWSCVCWSQTVPRNSSRKEKKCQCRLW.

The N-terminal stretch at 1-17 is a signal peptide; the sequence is MKLSIFFVLFFIAIAYC. The propeptide occupies 18-40; it reads QPEFLDDEEDEVEETLPVAEEGR. 4 disulfides stabilise this stretch: Cys44–Cys59, Cys51–Cys64, Cys58–Cys84, and Cys66–Cys82.

The protein belongs to the neurotoxin omega-lctx family. Expressed by the venom gland.

Its subcellular location is the secreted. Its function is as follows. Modulates Cav2.1/CACNA1A voltage-gated calcium channels (P/Q-type currents) in rat cerebellar Purkinje cells and hippocampal CA1-CA3 neurons. At saturating concentrations (&gt;10 nM) decelerates activation kinetics and slightly increases peak amplitude without affecting deactivation kinetics. In vivo, does not cause death when intravenously injected into mice. In rat models, through its activity on Cav2.1/CACNA1A, has an ameliorative effect on memory defects provoked by hyperstimulation of N-methyl-D-aspartate receptors (NMDARs) in the hippocampus. The sequence is that of Omega-lycotoxin-Am1d from Alopecosa marikovskyi (Wolf spider).